We begin with the raw amino-acid sequence, 251 residues long: tRNA (guanine-N(7)-)-methyltransferase (251 aa).

Residues glycine 71, 94–95 (EL), 128–129 (NS), and leucine 148 each bind S-adenosyl-L-methionine. The active site involves aspartate 151. S-adenosyl-L-methionine is bound at residue 226–228 (TEE).

Belongs to the class I-like SAM-binding methyltransferase superfamily. TrmB family.

The protein resides in the nucleus. It carries out the reaction guanosine(46) in tRNA + S-adenosyl-L-methionine = N(7)-methylguanosine(46) in tRNA + S-adenosyl-L-homocysteine. Its pathway is tRNA modification; N(7)-methylguanine-tRNA biosynthesis. In terms of biological role, catalyzes the formation of N(7)-methylguanine at position 46 (m7G46) in tRNA. This Arabidopsis thaliana (Mouse-ear cress) protein is tRNA (guanine-N(7)-)-methyltransferase.